Here is a 64-residue protein sequence, read N- to C-terminus: Cytochrome c oxidase subunit 5C (64 aa).

The chain crosses the membrane as a helical span at residues V16–W34.

The protein belongs to the cytochrome c oxidase subunit 5C family. In terms of assembly, sweet potato cytochrome C oxidase consists of at least seven different polypeptides species, subunits I, II, III, IV, Va, Vb, and Vc in order of MW.

The protein resides in the mitochondrion inner membrane. Functionally, this protein is one of the nuclear-coded polypeptide chains of cytochrome c oxidase, the terminal oxidase in mitochondrial electron transport. The polypeptide is Cytochrome c oxidase subunit 5C (COX5C) (Ipomoea batatas (Sweet potato)).